A 194-amino-acid chain; its full sequence is Gonadal protein gdl (194 aa).

Belongs to the gonadal family. In stage 6-14 egg chamber nurse cells and oocytes of adult females and spermatocyte cysts and bundles of maturing sperm of larval, pupal and adult males.

The protein is Gonadal protein gdl (gdl) of Drosophila melanogaster (Fruit fly).